Here is a 317-residue protein sequence, read N- to C-terminus: Melanocyte-stimulating hormone receptor (317 aa).

The interval 1–28 (MPMQGAQGRLRGSLNATPPTTPHSGLAG) is disordered. The Extracellular segment spans residues 1–37 (MPMQGAQGRLRGSLNATPPTTPHSGLAGNQTGPWCLE). Residue N29 is glycosylated (N-linked (GlcNAc...) asparagine). The chain crosses the membrane as a helical span at residues 38–63 (VSIPDELFLSLGLVSLVENMLVVAAI). Residues 64-72 (AKNRNLHSP) lie on the Cytoplasmic side of the membrane. Residues 73 to 93 (MYYFICCLAVSDLLVSVSNVL) form a helical membrane-spanning segment. At 94–118 (ETAVMLLLEAGVLAAWAGVVQQLDN) the chain is on the extracellular side. A helical transmembrane segment spans residues 119–140 (AIDVFICGSMVSSLCFLGAIAV). At 141-163 (DRYITIFYALRYHSIVTLPRARW) the chain is on the cytoplasmic side. Residues 164–183 (AIATIWAASVVCSTLFIAYY) form a helical membrane-spanning segment. Residues 184–191 (DCTAVLLC) are Extracellular-facing. A helical transmembrane segment spans residues 192 to 211 (LVSFFLALVVLMAVLYMHML). The Cytoplasmic portion of the chain corresponds to 212-240 (ARACLHARSIARLHKRWRPVHQGLGLKGA). Residues 241 to 266 (ATLSILLGSFFLCWGPFFLHLTLIVL) form a helical membrane-spanning segment. Over 267 to 279 (CPQHPTCSCVFKN) the chain is Extracellular. A helical transmembrane segment spans residues 280–300 (FKLFLTLIICNSIVDPLIYAF). The Cytoplasmic portion of the chain corresponds to 301 to 317 (RSQELRKTLKEVLLCSW). C315 carries S-palmitoyl cysteine lipidation.

Belongs to the G-protein coupled receptor 1 family. In terms of assembly, interacts with MGRN1, but does not undergo MGRN1-mediated ubiquitination; this interaction competes with GNAS-binding and thus inhibits agonist-induced cAMP production. Interacts with OPN3; the interaction results in a decrease in MC1R-mediated cAMP signaling and ultimately a decrease in melanin production in melanocytes.

Its subcellular location is the cell membrane. Its function is as follows. Receptor for MSH (alpha, beta and gamma) and ACTH. The activity of this receptor is mediated by G proteins which activate adenylate cyclase. Mediates melanogenesis, the production of eumelanin (black/brown) and phaeomelanin (red/yellow), via regulation of cAMP signaling in melanocytes. This is Melanocyte-stimulating hormone receptor (MC1R) from Mammuthus primigenius (Siberian woolly mammoth).